The sequence spans 239 residues: Acyl-protein thioesterase 1 (239 aa).

Residues Ser-124, Asp-180, and His-213 each act as charge relay system in the active site.

It belongs to the AB hydrolase superfamily. AB hydrolase 2 family.

Its subcellular location is the cytoplasm. The protein resides in the nucleus. It carries out the reaction S-hexadecanoyl-L-cysteinyl-[protein] + H2O = L-cysteinyl-[protein] + hexadecanoate + H(+). Functionally, hydrolyzes fatty acids from S-acylated cysteine residues in proteins with a strong preference for palmitoylated G-alpha proteins over other acyl substrates. Mediates the deacylation of G-alpha proteins such as GPA1 in vivo, but has weak or no activity toward palmitoylated Ras proteins. Has weak lysophospholipase activity in vitro; however such activity may not exist in vivo. This Emericella nidulans (strain FGSC A4 / ATCC 38163 / CBS 112.46 / NRRL 194 / M139) (Aspergillus nidulans) protein is Acyl-protein thioesterase 1.